The chain runs to 596 residues: Transketolase-like protein 1 (596 aa).

Position 46 (H46) interacts with substrate. Thiamine diphosphate is bound by residues S49 and 94–96 (GWL). D126 contributes to the Mg(2+) binding site. The thiamine diphosphate site is built by V127 and N156. 2 residues coordinate Mg(2+): N156 and L158. The thiamine diphosphate site is built by K218 and H232. Residues H232, R292, and S319 each coordinate substrate. Thiamine diphosphate-binding residues include E340 and F366. E340 (proton donor) is an active-site residue. The substrate site is built by H390 and D398. Q402 is a thiamine diphosphate binding site. R448 serves as a coordination point for substrate.

The protein belongs to the transketolase family. Homodimer. It depends on Mg(2+) as a cofactor. Ca(2+) is required as a cofactor. Mn(2+) serves as cofactor. Requires Co(2+) as cofactor. The cofactor is thiamine diphosphate.

Its subcellular location is the cytoplasm. It carries out the reaction D-sedoheptulose 7-phosphate + D-glyceraldehyde 3-phosphate = aldehydo-D-ribose 5-phosphate + D-xylulose 5-phosphate. Catalyzes the transfer of a two-carbon ketol group from a ketose donor to an aldose acceptor, via a covalent intermediate with the cofactor thiamine pyrophosphate. This is Transketolase-like protein 1 (TKTL1) from Bos taurus (Bovine).